The following is a 54-amino-acid chain: Ovomucoid (54 aa).

Residues 4-54 (VDCSDYPKPVCTLEDMPLCGSDNITYHNKCYFCNAVAHSNGTLTFSHFGKC) enclose the Kazal-like domain. 3 disulfides stabilise this stretch: cysteine 6–cysteine 36, cysteine 14–cysteine 33, and cysteine 22–cysteine 54. Asparagine 43 carries an N-linked (GlcNAc...) asparagine glycan.

It localises to the secreted. The polypeptide is Ovomucoid (Carpococcyx renauldi (Coral-billed ground-cuckoo)).